An 877-amino-acid polypeptide reads, in one-letter code: MVPSEPPNPVGGGENVPPSILGGQGGAPLPSQPAFPSLVSPRTQFGNNMSMSMLGNAPNISSLLNNQSFVNGIPGSMISMDTSGAESDPMSNVGFSGLSSFNASSMVSPRSSGQVQGQQFSNVSANQLLAEQQRNKKMETQSFQHGQQQSMQQQFSTVRGGGLAGVGPVKMEPGQVSNDQQHGQVQQQQQKMLRNLGSVKLEPQQIQAMRNLAQVKMEPQHSEQSLFLQQQQRQQQQQQQQQFLQMPGQSPQAQMNIFQQQRLMQLQQQQLLKSMPQQRPQLPQQFQQQNLPLRPPLKPVYEPGMGAQRLTQYMYRQQHRPEDNNIEFWRKFVAEYFAPNAKKRWCVSMYGSGRQTTGVFPQDVWHCEICNRKPGRGFEATAEVLPRLFKIKYESGTLEELLYVDMPRESQNSSGQIVLEYAKATQESVFEHLRVVRDGQLRIVFSPDLKIFSWEFCARRHEELIPRRLLIPQVSQLGSAAQKYQQAAQNATTDSALPELQNNCNMFVASARQLAKALEVPLVNDLGYTKRYVRCLQISEVVNSMKDLIDYSRETRTGPIESLAKFPRRTGPSSALPGPSPQQASDQLRQQQQQQQQQQQQQQQQQQQQQQQQTVSQNTNSDQSSRQVALMQGNPSNGVNYAFNAASASTSTSSIAGLIHQNSMKGRHQNAAYNPPNSPYGGNSVQMQSPSSSGTMVPSSSQQQHNLPTFQSPTSSSNNNNPSQNGIPSVNHMGSTNSPAMQQAGEVDGNESSSVQKILNEILMNNQAHNNSSGGSMVGHGSFGNDGKGQANVNSSGVLLMNGQVNNNNNTNIGGAGGFGGGIGQSMAANGINNINGNNSLMNGRVGMMVRDPNGQQDLGNQLLGAVNGFNNFDWNA.

2 disordered regions span residues 1–42 (MVPS…VSPR) and 272–295 (LKSMPQQRPQLPQQFQQQNLPLRP). Positions 272-292 (LKSMPQQRPQLPQQFQQQNLP) are enriched in low complexity. Positions 321-563 (PEDNNIEFWR…ETRTGPIESL (243 aa)) are dimerization. The Nuclear localization signal motif lies at 330–344 (RKFVAEYFAPNAKKR). Disordered stretches follow at residues 560-599 (IESLAKFPRRTGPSSALPGPSPQQASDQLRQQQQQQQQQQ), 612-633 (QQTVSQNTNSDQSSRQVALMQG), and 666-753 (GRHQ…NESS). A coiled-coil region spans residues 582-618 (QQASDQLRQQQQQQQQQQQQQQQQQQQQQQQQTVSQN). The segment covering 590 to 599 (QQQQQQQQQQ) has biased composition (low complexity). Positions 614 to 633 (TVSQNTNSDQSSRQVALMQG) are enriched in polar residues. 2 stretches are compositionally biased toward low complexity: residues 688 to 703 (QSPSSSGTMVPSSSQQ) and 711 to 725 (QSPTSSSNNNNPSQN). The span at 726-741 (GIPSVNHMGSTNSPAM) shows a compositional bias: polar residues.

This sequence belongs to the adn1/SEU family. In terms of assembly, forms a corepressor complex with LUG; LUG is the transcription repressor subunit and SEU the specific DNA-binding adapter. Interacts with AGL24-AP1 and SVP-AP1 dimers when complexed to SEU. Interacts with AP1/AGL7 and SEP3/AGL9. Binds to LUH. As to expression, expressed in root, leaves, seedlings, vegetative and reproductive shoot apical meristems, seeds, floral meristems and all floral organs.

The protein localises to the nucleus. It is found in the nucleoplasm. In terms of biological role, DNA-binding adapter subunit of the SEU-LUG transcriptional corepressor of the C class floral homeotic gene AGAMOUS during the early stages of floral meristem development. Is part of the A class cadastral complex that define the boundaries between the A and C class homeotic genes expression and function. Interacts together with APETALA2 and LEUNIG to repress AGAMOUS expression. In association with LUG, regulates petal shape through AGAMOUS-independent mechanisms. Controls cell division during petal development and enable the proper patterning of petal blade vasculature. Required for the proper elaboration of petal polarity along the adaxial/abaxial axis. May act through direct or indirect regulation of PHABULOSA and YAB1 and thus regulate cellular proliferation within the developing petal blade. In association with AINTEGUMENTA (ANT), coordinates patterning cues and cellular proliferation along the three positional axes of the developing gynoecium. Required for the development of the medial ridge and subsequent ovule initiation. This chain is Transcriptional corepressor SEUSS (SEU), found in Arabidopsis thaliana (Mouse-ear cress).